We begin with the raw amino-acid sequence, 379 residues long: Cytochrome b (379 aa).

4 helical membrane-spanning segments follow: residues 33–53 (FGSL…FLAM), 77–98 (WLIR…FIHV), 113–133 (WNIG…GYVL), and 178–198 (FFAF…VHLL). Positions 83 and 97 each coordinate heme b. Heme b-binding residues include histidine 182 and histidine 196. Histidine 201 contacts a ubiquinone. 4 helical membrane-spanning segments follow: residues 226-246 (TKDL…ALFF), 288-308 (LGGV…PLLN), 320-340 (ITQV…WIGG), and 347-367 (XTMI…ILIP).

This sequence belongs to the cytochrome b family. In terms of assembly, the cytochrome bc1 complex contains 11 subunits: 3 respiratory subunits (MT-CYB, CYC1 and UQCRFS1), 2 core proteins (UQCRC1 and UQCRC2) and 6 low-molecular weight proteins (UQCRH/QCR6, UQCRB/QCR7, UQCRQ/QCR8, UQCR10/QCR9, UQCR11/QCR10 and a cleavage product of UQCRFS1). This cytochrome bc1 complex then forms a dimer. The cofactor is heme b.

It is found in the mitochondrion inner membrane. Component of the ubiquinol-cytochrome c reductase complex (complex III or cytochrome b-c1 complex) that is part of the mitochondrial respiratory chain. The b-c1 complex mediates electron transfer from ubiquinol to cytochrome c. Contributes to the generation of a proton gradient across the mitochondrial membrane that is then used for ATP synthesis. This is Cytochrome b (MT-CYB) from Akodon boliviensis (Bolivian grass mouse).